A 179-amino-acid chain; its full sequence is Crossover junction endodeoxyribonuclease RuvC (179 aa).

Residues Asp-7, Glu-67, and Asp-139 contribute to the active site. The Mg(2+) site is built by Asp-7, Glu-67, and Asp-139.

Belongs to the RuvC family. Homodimer which binds Holliday junction (HJ) DNA. The HJ becomes 2-fold symmetrical on binding to RuvC with unstacked arms; it has a different conformation from HJ DNA in complex with RuvA. In the full resolvosome a probable DNA-RuvA(4)-RuvB(12)-RuvC(2) complex forms which resolves the HJ. The cofactor is Mg(2+).

It is found in the cytoplasm. It catalyses the reaction Endonucleolytic cleavage at a junction such as a reciprocal single-stranded crossover between two homologous DNA duplexes (Holliday junction).. In terms of biological role, the RuvA-RuvB-RuvC complex processes Holliday junction (HJ) DNA during genetic recombination and DNA repair. Endonuclease that resolves HJ intermediates. Cleaves cruciform DNA by making single-stranded nicks across the HJ at symmetrical positions within the homologous arms, yielding a 5'-phosphate and a 3'-hydroxyl group; requires a central core of homology in the junction. The consensus cleavage sequence is 5'-(A/T)TT(C/G)-3'. Cleavage occurs on the 3'-side of the TT dinucleotide at the point of strand exchange. HJ branch migration catalyzed by RuvA-RuvB allows RuvC to scan DNA until it finds its consensus sequence, where it cleaves and resolves the cruciform DNA. This is Crossover junction endodeoxyribonuclease RuvC from Sorangium cellulosum (strain So ce56) (Polyangium cellulosum (strain So ce56)).